Consider the following 937-residue polypeptide: Translation initiation factor IF-2 (937 aa).

Disordered regions lie at residues 157–230 (KEAQ…AARK) and 250–346 (IKAP…ESNF). Over residues 173-205 (EAQKADAAKPVEAKADESAQEEKKRVAAEESKK) the composition is skewed to basic and acidic residues. Positions 252-265 (APEPAAPVAAKPAE) are enriched in low complexity. Positions 267–293 (TLHKPADKKAGEKKDEKKPAVTADKKS) are enriched in basic and acidic residues. Positions 295-304 (KSANVSSTWQ) are enriched in polar residues. Residues 437–606 (PRAPVVTVMG…LLQAEVLELK (170 aa)) form the tr-type G domain. Residues 446-453 (GHVDHGKT) form a G1 region. Position 446 to 453 (446 to 453 (GHVDHGKT)) interacts with GTP. Residues 471–475 (GITQH) are G2. A G3 region spans residues 492–495 (DTPG). Residues 492–496 (DTPGH) and 546–549 (NKID) each bind GTP. The segment at 546–549 (NKID) is G4. Residues 582–584 (SAK) are G5.

It belongs to the TRAFAC class translation factor GTPase superfamily. Classic translation factor GTPase family. IF-2 subfamily.

It localises to the cytoplasm. One of the essential components for the initiation of protein synthesis. Protects formylmethionyl-tRNA from spontaneous hydrolysis and promotes its binding to the 30S ribosomal subunits. Also involved in the hydrolysis of GTP during the formation of the 70S ribosomal complex. The protein is Translation initiation factor IF-2 of Janthinobacterium sp. (strain Marseille) (Minibacterium massiliensis).